The chain runs to 397 residues: Phosphoglycerate kinase (397 aa).

Residues aspartate 21–asparagine 23, arginine 37, histidine 60–arginine 63, arginine 119, and arginine 152 contribute to the substrate site. ATP-binding positions include lysine 203, glycine 294, glutamate 325, and glycine 354 to serine 357.

It belongs to the phosphoglycerate kinase family. Monomer.

The protein resides in the cytoplasm. It carries out the reaction (2R)-3-phosphoglycerate + ATP = (2R)-3-phospho-glyceroyl phosphate + ADP. It participates in carbohydrate degradation; glycolysis; pyruvate from D-glyceraldehyde 3-phosphate: step 2/5. The chain is Phosphoglycerate kinase from Chlorobium phaeobacteroides (strain BS1).